Consider the following 1506-residue polypeptide: Phosphatidylinositol 3-kinase C2 domain-containing subunit gamma (1506 aa).

The segment at 1–34 (MAYSWQTEPNRTEPQEDGSDTQQFHHTNQHLSSR) is disordered. Polar residues predominate over residues 20–34 (DTQQFHHTNQHLSSR). One can recognise a PI3K-RBD domain in the interval 285–371 (DTKFRVKISI…IQLHLQKNRD (87 aa)). A C2 PI3K-type domain is found at 541–689 (LQSHLSFTVC…SPLTLQIDFP (149 aa)). A PIK helical domain is found at 704–880 (RTDHEEPPRE…QELLAALQFC (177 aa)). The PI3K/PI4K catalytic domain maps to 949–1227 (DRDACSYFTS…KIKESLECFP (279 aa)). Positions 955–961 (YFTSNAS) are G-loop. The tract at residues 1091 to 1099 (GVCDRHNDN) is catalytic loop. The interval 1110 to 1136 (HIDFGKFLGHAQTFGGIKRDRAPFIFT) is activation loop. The PX domain maps to 1260-1372 (LNKTRTIQRV…SFFLSEHIQP (113 aa)). The C2 domain maps to 1381–1506 (DPGENSLDKS…KWYPLGNSII (126 aa)).

It belongs to the PI3/PI4-kinase family. Expressed predominantly in liver. Also found in kidney, lung and lymphoid tissue. Down-regulated in BeF3 cells expressing the BCR-ABL oncogene p185.

It localises to the membrane. It carries out the reaction a 1,2-diacyl-sn-glycero-3-phospho-(1D-myo-inositol 4-phosphate) + ATP = a 1,2-diacyl-sn-glycero-3-phospho-(1D-myo-inositol-3,4-bisphosphate) + ADP + H(+). The enzyme catalyses a 1,2-diacyl-sn-glycero-3-phospho-(1D-myo-inositol) + ATP = a 1,2-diacyl-sn-glycero-3-phospho-(1D-myo-inositol-3-phosphate) + ADP + H(+). Functionally, generates phosphatidylinositol 3-phosphate (PtdIns3P) and phosphatidylinositol 3,4-bisphosphate (PtdIns(3,4)P2) that act as second messengers. May play a role in SDF1A-stimulated chemotaxis. In Mus musculus (Mouse), this protein is Phosphatidylinositol 3-kinase C2 domain-containing subunit gamma (Pik3c2g).